A 110-amino-acid polypeptide reads, in one-letter code: Insulin (110 aa).

Residues 1-24 form the signal peptide; that stretch reads MALWMRLLPLLALLALWGPDPAQA. Disulfide bonds link C31/C96, C43/C109, and C95/C100. A propeptide spans 57–87 (c peptide); the sequence is EAEDLQVGQVELGGGPGAGSLQPLALEGSLQ.

Belongs to the insulin family. As to quaternary structure, heterodimer of a B chain and an A chain linked by two disulfide bonds.

Its subcellular location is the secreted. Insulin decreases blood glucose concentration. It increases cell permeability to monosaccharides, amino acids and fatty acids. It accelerates glycolysis, the pentose phosphate cycle, and glycogen synthesis in liver. This Pongo pygmaeus (Bornean orangutan) protein is Insulin (INS).